Reading from the N-terminus, the 289-residue chain is Protease HtpX (289 aa).

2 helical membrane passes run 4 to 24 (IMLF…VLNI) and 36 to 56 (LSGL…ISLM). Zn(2+) is bound at residue His143. Residue Glu144 is part of the active site. A Zn(2+)-binding site is contributed by His147. 2 consecutive transmembrane segments (helical) span residues 158-178 (LMQG…ANIV) and 192-212 (MVYF…ASFL). A Zn(2+)-binding site is contributed by Glu221.

This sequence belongs to the peptidase M48B family. It depends on Zn(2+) as a cofactor.

The protein localises to the cell inner membrane. The polypeptide is Protease HtpX (Vibrio campbellii (strain ATCC BAA-1116)).